Here is a 510-residue protein sequence, read N- to C-terminus: Lysine-specific demethylase 4D (510 aa).

In terms of domain architecture, JmjN spans 15–57 (IMIFRPTKEEFNDFDKYIAYMESQGAHRAGLAKVIPPKEWRAR). Glu23 and Glu24 each carry polyADP-ribosyl glutamic acid. Position 133 (Tyr133) interacts with 2-oxoglutarate. Residues 143 to 309 (DGKTQQWNVG…YGKVASQCSC (167 aa)) enclose the JmjC domain. The Fe cation site is built by His189 and Glu191. Positions 199 and 207 each coordinate 2-oxoglutarate. 2 residues coordinate Zn(2+): Cys235 and His241. Lys242 is a 2-oxoglutarate binding site. A Fe cation-binding site is contributed by His277. Residues Cys307 and Cys309 each coordinate Zn(2+). The interval 397 to 510 (MCHTSRQAAD…ASEGGLTSDP (114 aa)) is disordered. The segment covering 461 to 471 (RLPEGRDDRSP) has biased composition (basic and acidic residues).

This sequence belongs to the JHDM3 histone demethylase family. Fe(2+) serves as cofactor. In terms of processing, ubiquitinated via 'Lys-63'-linked ubiquitin chains. Deubiquitinated by USP14 with the help of TRIM14 leading to stabilization.

Its subcellular location is the nucleus. The catalysed reaction is N(6),N(6),N(6)-trimethyl-L-lysyl(9)-[histone H3] + 2 2-oxoglutarate + 2 O2 = N(6)-methyl-L-lysyl(9)-[histone H3] + 2 formaldehyde + 2 succinate + 2 CO2. Functionally, histone demethylase that specifically demethylates 'Lys-9' of histone H3, thereby playing a central role in histone code. Does not demethylate histone H3 'Lys-4', H3 'Lys-27', H3 'Lys-36' nor H4 'Lys-20'. Demethylates both di- and trimethylated H3 'Lys-9' residue, while it has no activity on monomethylated residues. Demethylation of Lys residue generates formaldehyde and succinate. This chain is Lysine-specific demethylase 4D (Kdm4d), found in Rattus norvegicus (Rat).